We begin with the raw amino-acid sequence, 111 residues long: WAP four-disulfide core domain protein 12 (111 aa).

The signal sequence occupies residues 1–23 (MGSSSFLVLMVSLTLVTLVAAEG). Residues 27 to 74 (GIEKAGVCPADNVRCFKSDPPQCHTDQDCLGERKCCYLHCGFKCVIPV) form the WAP domain. Intrachain disulfides connect Cys34/Cys62, Cys41/Cys66, Cys49/Cys61, and Cys55/Cys70. Residues 80-111 (GGNKDEDVSGPCPEPGWEAKSPGSSSTGCPQK) are disordered. The segment covering 101–111 (PGSSSTGCPQK) has biased composition (polar residues).

The protein resides in the secreted. Functionally, antibacterial protein. Putative acid-stable proteinase inhibitor. This chain is WAP four-disulfide core domain protein 12 (WFDC12), found in Chlorocebus aethiops (Green monkey).